Reading from the N-terminus, the 200-residue chain is Vacuolar iron transporter homolog 3 (200 aa).

Topologically, residues 1–31 are cytoplasmic; it reads MESHNTLNLDMEKDQEKAFDYSKRAQWLRAA. A helical transmembrane segment spans residues 32-52; the sequence is VLGANDGLVSTASLMMGVGAV. Residues 53–59 lie on the Vacuolar side of the membrane; sequence KQNVKIM. The helical transmembrane segment at 60–80 threads the bilayer; sequence ILTGFAGLVAGACSMAIGEFV. Topologically, residues 81-113 are cytoplasmic; it reads SVYSQYDIEVAQMKRETGGEIEKEKLPSPTQAA. A helical transmembrane segment spans residues 114 to 134; sequence AASALAFSLGAMVPLLAAAFV. The Vacuolar portion of the chain corresponds to 135–140; it reads KEYKVR. The helical transmembrane segment at 141-161 threads the bilayer; that stretch reads IGAIVAAVTLALVMFGWLGAV. Residues 162–173 lie on the Cytoplasmic side of the membrane; it reads LGKAPVVKSSLR. A helical membrane pass occupies residues 174–194; sequence VLVGGWLAMAITYGFTKLIGS. Topologically, residues 195–200 are vacuolar; it reads HSHMYV.

It belongs to the CCC1 family.

It is found in the vacuole membrane. It catalyses the reaction Fe(2+)(in) = Fe(2+)(out). Probable vacuolar iron transporter that may be involved in the regulation of iron distribution throughout the plant. The protein is Vacuolar iron transporter homolog 3 of Arabidopsis thaliana (Mouse-ear cress).